The primary structure comprises 146 residues: Snaclec 1 (146 aa).

Positions 1-23 (MGRFIFMSFGLLVVFLSLSGTGA) are cleaved as a signal peptide. 3 disulfides stabilise this stretch: cysteine 25/cysteine 36, cysteine 53/cysteine 142, and cysteine 119/cysteine 134. Residues 32-143 (YEGHCYRVFQ…CSRTYSFVCK (112 aa)) form the C-type lectin domain.

This sequence belongs to the snaclec family. In terms of assembly, heterodimer; disulfide-linked. As to expression, expressed by the venom gland.

It is found in the secreted. Interferes with one step of hemostasis (modulation of platelet aggregation, or coagulation cascade, for example). The sequence is that of Snaclec 1 from Sistrurus catenatus edwardsii (Desert massasauga).